The following is a 436-amino-acid chain: UDP-N-acetylmuramate--L-alanine ligase (436 aa).

110-116 (GAHGKTS) lines the ATP pocket.

Belongs to the MurCDEF family.

Its subcellular location is the cytoplasm. The catalysed reaction is UDP-N-acetyl-alpha-D-muramate + L-alanine + ATP = UDP-N-acetyl-alpha-D-muramoyl-L-alanine + ADP + phosphate + H(+). It functions in the pathway cell wall biogenesis; peptidoglycan biosynthesis. Its function is as follows. Cell wall formation. The polypeptide is UDP-N-acetylmuramate--L-alanine ligase (Lacticaseibacillus casei (strain BL23) (Lactobacillus casei)).